The chain runs to 502 residues: 1-aminocyclopropane-1-carboxylate synthase-like protein 1 (502 aa).

The segment at 15 to 35 (CPGSDSIQDLPSNKGDGLERE) is disordered. Glu-106 contributes to the substrate binding site. Lys-324 is modified (N6-(pyridoxal phosphate)lysine).

The protein belongs to the class-I pyridoxal-phosphate-dependent aminotransferase family.

In terms of biological role, does not catalyze the synthesis of 1-aminocyclopropane-1-carboxylate but is capable of catalyzing the deamination of L-vinylglycine. The sequence is that of 1-aminocyclopropane-1-carboxylate synthase-like protein 1 (ACCS) from Bos taurus (Bovine).